Consider the following 239-residue polypeptide: Transcriptional regulatory protein BtsR (239 aa).

The Response regulatory domain occupies 3-116 (KVLIVDDEPL…RLEKTLARLR (114 aa)). At Asp-54 the chain carries 4-aspartylphosphate. The 103-residue stretch at 137–239 (IPCTGHSRIY…LKSLKEAIGL (103 aa)) folds into the HTH LytTR-type domain.

Post-translationally, phosphorylated by BtsS.

In terms of biological role, member of the two-component regulatory system BtsS/BtsR. BtsR regulates expression of btsT by binding to its promoter region. This Shigella flexneri protein is Transcriptional regulatory protein BtsR.